An 89-amino-acid polypeptide reads, in one-letter code: Small ribosomal subunit protein uS19 (89 aa).

The protein belongs to the universal ribosomal protein uS19 family.

Protein S19 forms a complex with S13 that binds strongly to the 16S ribosomal RNA. In Ruthia magnifica subsp. Calyptogena magnifica, this protein is Small ribosomal subunit protein uS19.